The chain runs to 281 residues: ATP phosphoribosyltransferase (281 aa).

Belongs to the ATP phosphoribosyltransferase family. Long subfamily. Mg(2+) is required as a cofactor.

Its subcellular location is the cytoplasm. It catalyses the reaction 1-(5-phospho-beta-D-ribosyl)-ATP + diphosphate = 5-phospho-alpha-D-ribose 1-diphosphate + ATP. It functions in the pathway amino-acid biosynthesis; L-histidine biosynthesis; L-histidine from 5-phospho-alpha-D-ribose 1-diphosphate: step 1/9. Its activity is regulated as follows. Feedback inhibited by histidine. Catalyzes the condensation of ATP and 5-phosphoribose 1-diphosphate to form N'-(5'-phosphoribosyl)-ATP (PR-ATP). Has a crucial role in the pathway because the rate of histidine biosynthesis seems to be controlled primarily by regulation of HisG enzymatic activity. The sequence is that of ATP phosphoribosyltransferase from Corynebacterium jeikeium (strain K411).